Consider the following 457-residue polypeptide: Exodeoxyribonuclease 7 large subunit (457 aa).

This sequence belongs to the XseA family. Heterooligomer composed of large and small subunits.

It is found in the cytoplasm. It carries out the reaction Exonucleolytic cleavage in either 5'- to 3'- or 3'- to 5'-direction to yield nucleoside 5'-phosphates.. Bidirectionally degrades single-stranded DNA into large acid-insoluble oligonucleotides, which are then degraded further into small acid-soluble oligonucleotides. The protein is Exodeoxyribonuclease 7 large subunit of Escherichia coli O127:H6 (strain E2348/69 / EPEC).